The chain runs to 487 residues: Protein FAM221B (487 aa).

2 stretches are compositionally biased toward polar residues: residues 1–13 (MEAN…PQDT) and 36–48 (HETP…SQKH). Disordered regions lie at residues 1-103 (MEAN…QSVT) and 132-289 (QLSP…VTSR). Positions 81-103 (PPVKSSSSGLLSLPPQLSPQSVT) are enriched in low complexity. 2 stretches are compositionally biased toward basic and acidic residues: residues 227–236 (ESEHFPKHSF) and 243–253 (AKEDESTKEGE). Position 248 is a phosphoserine (Ser248).

Belongs to the FAM221 family.

This is Protein FAM221B (Fam221b) from Mus musculus (Mouse).